A 197-amino-acid polypeptide reads, in one-letter code: Phospholipid hydroperoxide glutathione peroxidase (197 aa).

S40 is modified (phosphoserine). The active site involves U73. A non-standard amino acid (selenocysteine) is located at residue U73.

Belongs to the glutathione peroxidase family. Monomer. Has a tendency to form higher mass oligomers. Interacts with FUNDC1; this interaction promotes GPX4 recruitment into mitochondria through TOM/TIM complex where it is degraded by mitophagy.

It is found in the mitochondrion. It localises to the cytoplasm. It catalyses the reaction a hydroperoxy polyunsaturated fatty acid + 2 glutathione = a hydroxy polyunsaturated fatty acid + glutathione disulfide + H2O. It carries out the reaction 2 glutathione + H2O2 = glutathione disulfide + 2 H2O. The enzyme catalyses tert-butyl hydroperoxide + 2 glutathione = tert-butanol + glutathione disulfide + H2O. The catalysed reaction is cumene hydroperoxide + 2 glutathione = 2-phenylpropan-2-ol + glutathione disulfide + H2O. It catalyses the reaction (9S)-hydroperoxy-(10E,12Z)-octadecadienoate + 2 glutathione = (9S)-hydroxy-(10E,12Z)-octadecadienoate + glutathione disulfide + H2O. It carries out the reaction (13S)-hydroperoxy-(9Z,11E)-octadecadienoate + 2 glutathione = (13S)-hydroxy-(9Z,11E)-octadecadienoate + glutathione disulfide + H2O. The enzyme catalyses (5S)-hydroperoxy-(6E,8Z,11Z,14Z)-eicosatetraenoate + 2 glutathione = (5S)-hydroxy-(6E,8Z,11Z,14Z)-eicosatetraenoate + glutathione disulfide + H2O. The catalysed reaction is (12R)-hydroperoxy-(5Z,8Z,10E,14Z)-eicosatetraenoate + 2 glutathione = (12R)-hydroxy-(5Z,8Z,10E,14Z)-eicosatetraenoate + glutathione disulfide + H2O. It catalyses the reaction (12S)-hydroperoxy-(5Z,8Z,10E,14Z)-eicosatetraenoate + 2 glutathione = (12S)-hydroxy-(5Z,8Z,10E,14Z)-eicosatetraenoate + glutathione disulfide + H2O. It carries out the reaction (15S)-hydroperoxy-(5Z,8Z,11Z,13E)-eicosatetraenoate + 2 glutathione = (15S)-hydroxy-(5Z,8Z,11Z,13E)-eicosatetraenoate + glutathione disulfide + H2O. The enzyme catalyses (5S)-hydroperoxy-(6E,8Z,11Z,14Z,17Z)-eicosapentaenoate + 2 glutathione = (5S)-hydroxy-(6E,8Z,11Z,14Z,17Z)-eicosapentaenoate + glutathione disulfide + H2O. The catalysed reaction is (12S)-hydroperoxy-(5Z,8Z,10E,14Z,17Z)-eicosapentaenoate + 2 glutathione = (12S)-hydroxy-(5Z,8Z,10E,14Z,17Z)-eicosapentaenoate + glutathione disulfide + H2O. It catalyses the reaction (15S)-hydroperoxy-(5Z,8Z,11Z,13E,17Z)-eicosapentaenoate + 2 glutathione = (15S)-hydroxy-(5Z,8Z,11Z,13E,17Z)-eicosapentaenoate + glutathione disulfide + H2O. It carries out the reaction (15S)-hydroperoxy-(11Z,13E)-eicosadienoate + 2 glutathione = (15S)-hydroxy-(11Z,13E)-eicosadienoate + glutathione disulfide + H2O. The enzyme catalyses (17S)-hydroperoxy-(4Z,7Z,10Z,13Z,15E,19Z)-docosahexaenoate + 2 glutathione = (17S)-hydroxy-(4Z,7Z,10Z,13Z,15E,19Z)-docosahexaenoate + glutathione disulfide + H2O. The catalysed reaction is a hydroperoxy-1,2-diacyl-glycero-3-phosphocholine + 2 glutathione = a hydroxy-1,2-diacyl-glycero-3-phosphocholine + glutathione disulfide + H2O. Functionally, essential antioxidant peroxidase that directly reduces phospholipid hydroperoxide even if they are incorporated in membranes and lipoproteins. Can also reduce fatty acid hydroperoxide, cholesterol hydroperoxide and thymine hydroperoxide. Plays a key role in protecting cells from oxidative damage by preventing membrane lipid peroxidation. Required to prevent cells from ferroptosis, a non-apoptotic cell death resulting from an iron-dependent accumulation of lipid reactive oxygen species. The presence of selenocysteine (Sec) versus Cys at the active site is essential for life: it provides resistance to overoxidation and prevents cells against ferroptosis. The presence of Sec at the active site is also essential for the survival of a specific type of parvalbumin-positive interneurons, thereby preventing against fatal epileptic seizures. May be required to protect cells from the toxicity of ingested lipid hydroperoxides. Required for normal sperm development and male fertility. Essential for maturation and survival of photoreceptor cells. Plays a role in a primary T-cell response to viral and parasitic infection by protecting T-cells from ferroptosis and by supporting T-cell expansion. Plays a role of glutathione peroxidase in platelets in the arachidonic acid metabolism. Reduces hydroperoxy ester lipids formed by a 15-lipoxygenase that may play a role as down-regulator of the cellular 15-lipoxygenase pathway. Can also reduce small soluble hydroperoxides such as H2O2, cumene hydroperoxide and tert-butyl hydroperoxide. In Sus scrofa (Pig), this protein is Phospholipid hydroperoxide glutathione peroxidase.